The primary structure comprises 113 residues: Dolichyl-diphosphooligosaccharide--protein glycosyltransferase subunit DAD1 (113 aa).

An N-acetylserine modification is found at Ser2. Residues 2–30 are Cytoplasmic-facing; the sequence is SASVLSVISRFLEEYLSATPQRLKLLDAY. Residues 31–51 form a helical membrane-spanning segment; it reads LLYILLTGALQFGYCLLVGTF. Pro52 is a topological domain (lumenal). A helical transmembrane segment spans residues 53–73; sequence FNSFLSGFISCVGSFILAVCL. The Cytoplasmic segment spans residues 74–92; that stretch reads RIQINPQNKADFQGISPER. A helical transmembrane segment spans residues 93–113; sequence AFADFLFASTILHLVVMNFVG.

It belongs to the DAD/OST2 family. In terms of assembly, component of the oligosaccharyltransferase (OST) complex. OST exists in two different complex forms which contain common core subunits RPN1, RPN2, OST48, OST4, DAD1 and TMEM258, either STT3A or STT3B as catalytic subunits, and form-specific accessory subunits. STT3A complex assembly occurs through the formation of 3 subcomplexes. Subcomplex 1 contains RPN1 and TMEM258, subcomplex 2 contains the STT3A-specific subunits STT3A, DC2/OSTC, and KCP2 as well as the core subunit OST4, and subcomplex 3 contains RPN2, DAD1, and OST48. The STT3A complex can form stable complexes with the Sec61 complex or with both the Sec61 and TRAP complexes.

It is found in the endoplasmic reticulum membrane. It functions in the pathway protein modification; protein glycosylation. Its function is as follows. Subunit of the oligosaccharyl transferase (OST) complex that catalyzes the initial transfer of a defined glycan (Glc(3)Man(9)GlcNAc(2) in eukaryotes) from the lipid carrier dolichol-pyrophosphate to an asparagine residue within an Asn-X-Ser/Thr consensus motif in nascent polypeptide chains, the first step in protein N-glycosylation. N-glycosylation occurs cotranslationally and the complex associates with the Sec61 complex at the channel-forming translocon complex that mediates protein translocation across the endoplasmic reticulum (ER). All subunits are required for a maximal enzyme activity. This is Dolichyl-diphosphooligosaccharide--protein glycosyltransferase subunit DAD1 from Bos taurus (Bovine).